The primary structure comprises 579 residues: Thiol:disulfide interchange protein DsbD (579 aa).

The N-terminal stretch at 1-16 (MKKLFLFFTLIFTAFA) is a signal peptide. 2 cysteine pairs are disulfide-bonded: cysteine 124/cysteine 129 and cysteine 193/cysteine 315. 8 consecutive transmembrane segments (helical) span residues 178 to 198 (IFGF…LPML), 230 to 250 (LTYT…QIAL), 254 to 274 (YVMI…FGLF), 296 to 316 (GAFG…SPCT), 337 to 357 (AVTL…ITLF), 376 to 396 (FGFV…PEVW), 397 to 417 (ESRL…LQMS), and 420 to 440 (GFGY…VQPL). One can recognise a Thioredoxin domain in the interval 449–579 (TTTQSAVENM…AFSNWIEKLL (131 aa)). An intrachain disulfide couples cysteine 495 to cysteine 498.

Belongs to the thioredoxin family. DsbD subfamily.

It localises to the cell inner membrane. It carries out the reaction [protein]-dithiol + NAD(+) = [protein]-disulfide + NADH + H(+). It catalyses the reaction [protein]-dithiol + NADP(+) = [protein]-disulfide + NADPH + H(+). In terms of biological role, required to facilitate the formation of correct disulfide bonds in some periplasmic proteins and for the assembly of the periplasmic c-type cytochromes. Acts by transferring electrons from cytoplasmic thioredoxin to the periplasm. This transfer involves a cascade of disulfide bond formation and reduction steps. The sequence is that of Thiol:disulfide interchange protein DsbD from Haemophilus influenzae (strain PittGG).